A 191-amino-acid chain; its full sequence is uncharacterized protein (191 aa).

4 helical membrane-spanning segments follow: residues 12 to 32, 48 to 68, 92 to 112, and 168 to 188; these read FAFL…FFTL, LVAL…LTLF, YISV…LLSL, and IFCL…SCAF.

The protein resides in the membrane. This is an uncharacterized protein from Saccharomyces cerevisiae (strain ATCC 204508 / S288c) (Baker's yeast).